Consider the following 913-residue polypeptide: Protein ECT2 (913 aa).

Alanine 2 carries the post-translational modification N-acetylalanine. BRCT domains follow at residues 176 to 260 and 266 to 354; these read MLNL…AAVD and FKVP…MYLY. Threonine 359 carries the phosphothreonine; by PKC/PRKCI modification. A phosphoserine mark is found at serine 367 and serine 370. Threonine 373 is subject to Phosphothreonine. Serine 376 is modified (phosphoserine). 2 short sequence motifs (nuclear localization signal) span residues 378–382 and 401–405; these read RKRRR and PRKRP. Disordered stretches follow at residues 389 to 415 and 427 to 450; these read QLSRETDLSPFPPRKRPSAEHSLSIGS and IHYGETPKSCAKSSRSSTPVPPKQ. The residue at position 444 (threonine 444) is a Phosphothreonine; by CDK1. Positions 452–641 constitute a DH domain; sequence ARWQVAKELY…KEVMTHINED (190 aa). Lysine 611 is covalently cross-linked (Glycyl lysine isopeptide (Lys-Gly) (interchain with G-Cter in SUMO2)). Residues 675–794 enclose the PH domain; that stretch reads RVETVSLGEH…KMLCRHVANT (120 aa). 2 positions are modified to phosphoserine: serine 716 and serine 842. Phosphothreonine; by CDK1 is present on threonine 846. The disordered stretch occupies residues 853 to 874; it reads MALSSSHSSEGRSPPSSGKLAV. Residues 856-870 are compositionally biased toward low complexity; the sequence is SSSHSSEGRSPPSSG. Phosphoserine occurs at positions 861 and 865.

As to quaternary structure, homodimer. Homooligomer. Found in the centralspindlin complex. Interacts with NR1I3. Interacts (Thr-359 phosphorylated form) with PARD6A; the interaction is observed in cancer cells. Interacts (Thr-359 phosphorylated form) with PRKCI; the interaction is observed in cancer cells. Interacts with PKP4; the interaction is observed at the midbody. Interacts with RACGAP1; the interaction is direct, occurs in a microtubule-dependent manner, occurs at anaphase and during cytokinesis, is inhibited in metaphase by phosphorylation of ECT2 on Thr-373 and is stimulated in early anaphase by dephosphorylation of ECT2 probably on Thr-373 through CDK1 activity. Interacts with PLK1; the interaction is stimulated upon its phosphorylation on Thr-444. Interacts with RHOA; the interaction results in allosteric activation of ECT2. Interacts with KIF23, PARD3, PARD6B and PRKCQ. Interacts with NEDD9/HEF1. Post-translationally, phosphorylated by PLK1 in vitro. Hyperphosphorylated during the G2 phase of the cell cycle. Phosphorylation at Thr-373 occurs during the G2/M phase, relieves its auto-inhibition status and stimulates its GEF activity. Phosphorylation at Thr-444 in G2/M phase is required for subsequent binding with PLK1 and Rho exchange activation. Dephosphorylated at the time of cytokinesis. Phosphorylation at Thr-359 is required for its transformation activity in cancer cells. In terms of tissue distribution, highest expression in testis. Also detectable in brain, kidney, liver and spleen.

The protein resides in the nucleus. It is found in the cytoplasm. It localises to the cytoskeleton. The protein localises to the spindle. Its subcellular location is the cleavage furrow. The protein resides in the midbody. It is found in the cell junction. It localises to the tight junction. Its activity is regulated as follows. Autoinhibited by the C-terminal PH domain which folds back and binds to the surface of the DH domain, blocking binding of RHOA to the catalytic center of the DH domain. The 2nd BRCT domain is also involved in inhibition, probably by helping to impede RHOA binding. Allosterically activated by binding of activated GTP-bound RHOA to the PH domain which stimulates the release of PH inhibition and promotes the binding of substrate RHOA to the catalytic center. Binding of phosphorylated RACGAP1 to the N-terminal BRCT domain-containing region also releases autoinhibition. Functionally, guanine nucleotide exchange factor (GEF) that catalyzes the exchange of GDP for GTP. Promotes guanine nucleotide exchange on the Rho family members of small GTPases, like RHOA, RHOC, RAC1 and CDC42. Required for signal transduction pathways involved in the regulation of cytokinesis. Component of the centralspindlin complex that serves as a microtubule-dependent and Rho-mediated signaling required for the myosin contractile ring formation during the cell cycle cytokinesis. Regulates the translocation of RHOA from the central spindle to the equatorial region. Plays a role in the control of mitotic spindle assembly; regulates the activation of CDC42 in metaphase for the process of spindle fibers attachment to kinetochores before chromosome congression. Involved in the regulation of epithelial cell polarity; participates in the formation of epithelial tight junctions in a polarity complex PARD3-PARD6-protein kinase PRKCQ-dependent manner. Plays a role in the regulation of neurite outgrowth. Inhibits phenobarbital (PB)-induced NR1I3 nuclear translocation. Stimulates the activity of RAC1 through its association with the oncogenic PARD6A-PRKCI complex in cancer cells, thereby acting to coordinately drive tumor cell proliferation and invasion. Also stimulates genotoxic stress-induced RHOB activity in breast cancer cells leading to their cell death. In Mus musculus (Mouse), this protein is Protein ECT2 (Ect2).